The following is a 155-amino-acid chain: 6,7-dimethyl-8-ribityllumazine synthase (155 aa).

Residues phenylalanine 23, 57 to 59, and 81 to 83 contribute to the 5-amino-6-(D-ribitylamino)uracil site; these read AFE and AVI. Position 86 to 87 (86 to 87) interacts with (2S)-2-hydroxy-3-oxobutyl phosphate; the sequence is ST. Residue histidine 89 is the Proton donor of the active site. 5-amino-6-(D-ribitylamino)uracil is bound at residue phenylalanine 114. Residue arginine 128 coordinates (2S)-2-hydroxy-3-oxobutyl phosphate.

The protein belongs to the DMRL synthase family.

It carries out the reaction (2S)-2-hydroxy-3-oxobutyl phosphate + 5-amino-6-(D-ribitylamino)uracil = 6,7-dimethyl-8-(1-D-ribityl)lumazine + phosphate + 2 H2O + H(+). Its pathway is cofactor biosynthesis; riboflavin biosynthesis; riboflavin from 2-hydroxy-3-oxobutyl phosphate and 5-amino-6-(D-ribitylamino)uracil: step 1/2. Its function is as follows. Catalyzes the formation of 6,7-dimethyl-8-ribityllumazine by condensation of 5-amino-6-(D-ribitylamino)uracil with 3,4-dihydroxy-2-butanone 4-phosphate. This is the penultimate step in the biosynthesis of riboflavin. This Geobacter metallireducens (strain ATCC 53774 / DSM 7210 / GS-15) protein is 6,7-dimethyl-8-ribityllumazine synthase.